The primary structure comprises 1247 residues: Structural polyprotein (1247 aa).

The segment at 36 to 67 is host transcription inhibition; it reads RPAGQLAQLISAVSRLALRTVPQKPRRTRKIK. The tract at residues 53-103 is disordered; sequence LRTVPQKPRRTRKIKKQKQVKQEQQSTRNQKKKAPKQKQTQKKKRPGRRER. 2 stretches are compositionally biased toward basic residues: residues 59 to 71 and 81 to 100; these read KPRRTRKIKKQKQ and NQKKKAPKQKQTQKKKRPGR. Residues 60 to 98 carry the Nuclear localization signal motif; it reads PRRTRKIKKQKQVKQEQQSTRNQKKKAPKQKQTQKKKRP. Positions 83 to 113 are binding to the viral RNA; sequence KKKAPKQKQTQKKKRPGRRERMCMKIENDCI. The segment at 98–112 is ribosome-binding; the sequence is PGRRERMCMKIENDC. A disulfide bridge links cysteine 112 with cysteine 127. Positions 112–260 constitute a Peptidase S3 domain; the sequence is CIFEVKHEGK…KITPEGSVEW (149 aa). The active-site Charge relay system is histidine 138. A Nuclear export signal motif is present at residues 143–153; that stretch reads IDNADLAKLAF. Positions 154-159 are interaction with spike glycoprotein E2; sequence KRSSKY. Catalysis depends on aspartate 160, which acts as the Charge relay system. Residues 182 to 192 are dimerization of the capsid protein; that stretch reads PEGYYNWHHGA. The Charge relay system role is filled by serine 212. Residues 218–222 form a dimerization of the capsid protein region; that stretch reads DNKGR. Positions 261 to 273 are functions as an uncleaved signal peptide for the precursor of protein E3/E2; the sequence is SLALPVMCLLANT. 9 disulfide bridges follow: cysteine 268–cysteine 277, cysteine 282–cysteine 286, cysteine 285–cysteine 317, cysteine 343–cysteine 449, cysteine 346–cysteine 352, cysteine 415–cysteine 429, cysteine 477–cysteine 590, cysteine 525–cysteine 549, and cysteine 527–cysteine 544. N-linked (GlcNAc...) asparagine; by host glycosylation occurs at asparagine 272. The Extracellular portion of the chain corresponds to 325–691; that stretch reads NARENFNVYK…YYYELYPTTT (367 aa). N-linked (GlcNAc...) asparagine; by host glycosylation is present at asparagine 587. A helical transmembrane segment spans residues 692 to 712; sequence IAVLAAASIVVASLVGLSLGM. Topologically, residues 713–747 are cytoplasmic; sequence CICARRRCITPYELTPGATIPFLLGILCCVKTAKA. The interval 715-719 is interaction with the capsid protein; that stretch reads CARRR. 3 S-palmitoyl cysteine; by host lipidation sites follow: cysteine 720, cysteine 740, and cysteine 741. The tract at residues 720-740 is transient transmembrane before p62-6K protein processing; it reads CITPYELTPGATIPFLLGILC. Cysteine 720 and cysteine 741 are disulfide-bonded. Topologically, residues 748–762 are extracellular; the sequence is ASYYEAATYLWNEQQ. The helical transmembrane segment at 763 to 783 threads the bilayer; the sequence is PLFWLQLLIPLSAAIVVCNCL. Residues 784–787 are Cytoplasmic-facing; the sequence is KLLP. A helical membrane pass occupies residues 788-808; the sequence is CCCKTLTFLAVMSIGARTVSA. At 809–1223 the chain is on the extracellular side; that stretch reads YEHATVIPNT…AMSWVQKITG (415 aa). Intrachain disulfides connect cysteine 857–cysteine 922, cysteine 870–cysteine 902, cysteine 871–cysteine 904, and cysteine 876–cysteine 886. The segment at 892 to 909 is E1 fusion peptide loop; the sequence is VYPFMWGGAYCFCDAENT. Asparagine 949 and asparagine 1078 each carry an N-linked (GlcNAc...) asparagine; by host glycan. Disulfide bonds link cysteine 1067–cysteine 1079, cysteine 1109–cysteine 1184, cysteine 1114–cysteine 1188, and cysteine 1136–cysteine 1178. A helical transmembrane segment spans residues 1224–1244; that stretch reads GVGLVVAIAALILIIVLCVSF. Cysteine 1241 carries the S-palmitoyl cysteine; by host lipid modification. Residues 1245–1247 are Cytoplasmic-facing; the sequence is SRH.

As to quaternary structure, homodimer. Homomultimer. Interacts with host karyopherin KPNA4; this interaction allows the nuclear import of the viral capsid protein. Interacts with spike glycoprotein E2. Interacts with host IRAK1; the interaction leads to inhibition of IRAK1-dependent signaling. In terms of assembly, the precursor of protein E3/E2 and E1 form a heterodimer shortly after synthesis. The precursor of protein E3/E2 and E1 form a heterodimer shortly after synthesis. Processing of the precursor of protein E3/E2 into E2 and E3 results in a heterodimer of the spike glycoproteins E2 and E1. Spike at virion surface are constituted of three E2-E1 heterodimers. After target cell attachment and endocytosis, E1 change conformation to form homotrimers. Interacts with 6K protein. As to quaternary structure, interacts with spike glycoprotein E1. Processing of the precursor of protein E3/E2 into E2 and E3 results in a heterodimer of the spike glycoproteins E2 and E1. Spike at virion surface are constituted of a trimer of E2-E1 heterodimers. Interacts with 6K protein. Interacts with host MXRA8; this interaction mediates virus entry. In terms of assembly, oligomer. Interacts with spike glycoprotein E1. Interacts with spike glycoprotein E2. In terms of processing, structural polyprotein: Specific enzymatic cleavages in vivo yield mature proteins. Capsid protein is auto-cleaved during polyprotein translation, unmasking a signal peptide at the N-terminus of the precursor of E3/E2. The remaining polyprotein is then targeted to the host endoplasmic reticulum, where host signal peptidase cleaves it into pE2, 6K and E1 proteins. pE2 is further processed to mature E3 and E2 by host furin in trans-Golgi vesicle. Post-translationally, palmitoylated via thioester bonds. These palmitoylations may induce disruption of the C-terminus transmembrane. This would result in the reorientation of E2 C-terminus from lumenal to cytoplasmic side. N-glycosylated. In terms of processing, palmitoylated via thioester bonds.

It localises to the virion. The protein resides in the host cytoplasm. The protein localises to the host cell membrane. Its subcellular location is the host nucleus. It is found in the virion membrane. It localises to the host Golgi apparatus. The protein resides in the host trans-Golgi network. The protein localises to the host endoplasmic reticulum. It carries out the reaction Autocatalytic release of the core protein from the N-terminus of the togavirus structural polyprotein by hydrolysis of a -Trp-|-Ser- bond.. Forms an icosahedral capsid with a T=4 symmetry composed of 240 copies of the capsid protein surrounded by a lipid membrane through which penetrate 80 spikes composed of trimers of E1-E2 heterodimers. The capsid protein binds to the viral RNA genome at a site adjacent to a ribosome binding site for viral genome translation following genome release. Possesses a protease activity that results in its autocatalytic cleavage from the nascent structural protein. Following its self-cleavage, the capsid protein transiently associates with ribosomes, and within several minutes the protein binds to viral RNA and rapidly assembles into icosahedric core particles. The resulting nucleocapsid eventually associates with the cytoplasmic domain of the spike glycoprotein E2 at the cell membrane, leading to budding and formation of mature virions. In case of infection, new virions attach to target cells and after clathrin-mediated endocytosis their membrane fuses with the host endosomal membrane. This leads to the release of the nucleocapsid into the cytoplasm, followed by an uncoating event necessary for the genomic RNA to become accessible. The uncoating might be triggered by the interaction of capsid proteins with ribosomes. Binding of ribosomes would release the genomic RNA since the same region is genomic RNA-binding and ribosome-binding. Specifically inhibits interleukin-1 receptor-associated kinase 1/IRAK1-dependent signaling during viral entry, representing a means by which the alphaviruses may evade innate immune detection and activation prior to viral gene expression. Its function is as follows. Provides the signal sequence for the translocation of the precursor of protein E3/E2 to the host endoplasmic reticulum. Furin-cleaved E3 remains associated with spike glycoprotein E1 and mediates pH protection of the latter during the transport via the secretory pathway. After virion release from the host cell, the assembly protein E3 is gradually released in the extracellular space. In terms of biological role, plays a role in viral attachment to target host cell, by binding to the cell receptor MXRA8. Synthesized as a p62 precursor which is processed by furin at the cell membrane just before virion budding, giving rise to E2-E1 heterodimer. The p62-E1 heterodimer is stable, whereas E2-E1 is unstable and dissociate at low pH. p62 is processed at the last step, presumably to avoid E1 fusion activation before its final export to cell surface. E2 C-terminus contains a transitory transmembrane that would be disrupted by palmitoylation, resulting in reorientation of the C-terminal tail from lumenal to cytoplasmic side. This step is critical since E2 C-terminus is involved in budding by interacting with capsid proteins. This release of E2 C-terminus in cytoplasm occurs lately in protein export, and precludes premature assembly of particles at the endoplasmic reticulum membrane. Functionally, acts as a viroporin that participates in virus glycoprotein processing and transport to the plasma membrane, cell permeabilization and budding of viral particles. Disrupts the calcium homeostasis of the cell, probably at the endoplasmic reticulum level. This leads to cytoplasmic calcium elevation. Because of its lipophilic properties, the 6K protein is postulated to influence the selection of lipids that interact with the transmembrane domains of the glycoproteins, which, in turn, affects the deformability of the bilayer required for the extreme curvature that occurs as budding proceeds. Present in low amount in virions, about 3% compared to viral glycoproteins. Class II viral fusion protein. Fusion activity is inactive as long as E1 is bound to E2 in mature virion. After virus attachment to target cell via host MXRA8 and endocytosis, acidification of the endosome induce dissociation of E1/E2 heterodimer and concomitant trimerization of the E1 subunits. This E1 trimer is fusion active, and promotes release of viral nucleocapsid in cytoplasm after endosome and viral membrane fusion. Efficient fusion requires the presence of cholesterol and sphingolipid in the target membrane. The polypeptide is Structural polyprotein (Anopheles (Human)).